Consider the following 206-residue polypeptide: Imidazoleglycerol-phosphate dehydratase (206 aa).

The protein belongs to the imidazoleglycerol-phosphate dehydratase family.

It localises to the cytoplasm. The enzyme catalyses D-erythro-1-(imidazol-4-yl)glycerol 3-phosphate = 3-(imidazol-4-yl)-2-oxopropyl phosphate + H2O. Its pathway is amino-acid biosynthesis; L-histidine biosynthesis; L-histidine from 5-phospho-alpha-D-ribose 1-diphosphate: step 6/9. In Synechococcus sp. (strain JA-3-3Ab) (Cyanobacteria bacterium Yellowstone A-Prime), this protein is Imidazoleglycerol-phosphate dehydratase.